Consider the following 142-residue polypeptide: Large ribosomal subunit protein uL13 (142 aa).

Belongs to the universal ribosomal protein uL13 family. As to quaternary structure, part of the 50S ribosomal subunit.

Its function is as follows. This protein is one of the early assembly proteins of the 50S ribosomal subunit, although it is not seen to bind rRNA by itself. It is important during the early stages of 50S assembly. This is Large ribosomal subunit protein uL13 from Shewanella denitrificans (strain OS217 / ATCC BAA-1090 / DSM 15013).